We begin with the raw amino-acid sequence, 208 residues long: FMN-dependent NADH:quinone oxidoreductase (208 aa).

Residues 17–19 (SNS), 99–102 (MWNL), and 143–146 (SRGG) contribute to the FMN site.

It belongs to the azoreductase type 1 family. Homodimer. FMN is required as a cofactor.

It carries out the reaction 2 a quinone + NADH + H(+) = 2 a 1,4-benzosemiquinone + NAD(+). It catalyses the reaction N,N-dimethyl-1,4-phenylenediamine + anthranilate + 2 NAD(+) = 2-(4-dimethylaminophenyl)diazenylbenzoate + 2 NADH + 2 H(+). In terms of biological role, quinone reductase that provides resistance to thiol-specific stress caused by electrophilic quinones. Its function is as follows. Also exhibits azoreductase activity. Catalyzes the reductive cleavage of the azo bond in aromatic azo compounds to the corresponding amines. The protein is FMN-dependent NADH:quinone oxidoreductase of Staphylococcus carnosus (strain TM300).